Here is a 328-residue protein sequence, read N- to C-terminus: Probable cell division protein WhiA (328 aa).

Residues 275-308 (SLEELGQLASPPMTKDAVAGRIRRLLSMADKRAE) constitute a DNA-binding region (H-T-H motif).

It belongs to the WhiA family.

Involved in cell division and chromosome segregation. The sequence is that of Probable cell division protein WhiA from Corynebacterium urealyticum (strain ATCC 43042 / DSM 7109).